The sequence spans 180 residues: Protein SPMIP9 (180 aa).

Microtubule inner protein component of sperm flagellar doublet microtubules. In terms of tissue distribution, only detected after the mouse is 35 days old. Expression increases gradually from day 35 to 6 months, and remains stable after 54 days. Exclusively expressed in the epididymis and testis.

The protein localises to the nucleus. It localises to the cytoplasm. The protein resides in the cytoskeleton. Its subcellular location is the flagellum axoneme. Microtubule inner protein (MIP) part of the dynein-decorated doublet microtubules (DMTs) in flagella axoneme. The chain is Protein SPMIP9 (Spmip9) from Mus musculus (Mouse).